A 487-amino-acid chain; its full sequence is Probable glutamate receptor (487 aa).

The signal sequence occupies residues Met-1 to Gln-23. At Thr-24–Lys-169 the chain is on the extracellular side. N-linked (GlcNAc...) asparagine glycosylation occurs at Asn-104. Residues Glu-170 to Ala-190 traverse the membrane as a helical segment. The Cytoplasmic segment spans residues Arg-191–Arg-235. The chain crosses the membrane as a helical span at residues Val-236–Phe-256. Residues Thr-257–Ala-419 are Extracellular-facing. A helical transmembrane segment spans residues Leu-420–Val-440. The Cytoplasmic segment spans residues Glu-441 to Ala-487.

This sequence belongs to the glutamate-gated ion channel (TC 1.A.10.1) family.

The protein resides in the cell membrane. Its subcellular location is the postsynaptic cell membrane. Receptor for glutamate. L-glutamate acts as an excitatory neurotransmitter at many synapses in the central nervous system. The postsynaptic actions of Glu are mediated by a variety of receptors that are named according to their selective agonists. The polypeptide is Probable glutamate receptor (KBP) (Gallus gallus (Chicken)).